The chain runs to 536 residues: G-protein coupled receptor Mth2 (536 aa).

5 disulfide bridges follow: cysteine 17–cysteine 71, cysteine 73–cysteine 78, cysteine 82–cysteine 177, cysteine 83–cysteine 96, and cysteine 138–cysteine 197. 2 N-linked (GlcNAc...) asparagine glycosylation sites follow: asparagine 24 and asparagine 33. Asparagine 103, asparagine 113, asparagine 118, asparagine 159, and asparagine 184 each carry an N-linked (GlcNAc...) asparagine glycan. A helical membrane pass occupies residues 212-232 (YAMMFSIPFMMLTIAVYLLIP). Topologically, residues 233–241 (ELRNQHGKS) are cytoplasmic. A helical membrane pass occupies residues 242 to 262 (LVCYLIGLTVGYSSLCYVQLY). The Extracellular segment spans residues 263 to 273 (QVDATGVTCKV). The chain crosses the membrane as a helical span at residues 274 to 294 (FGYTAYFFFMGAYMWLSVISF). The Cytoplasmic portion of the chain corresponds to 295–314 (DLWHNFRGTRGINRFQEKKR). A helical transmembrane segment spans residues 315-335 (FLFYSLYSWGIALVFLAFTYC). Topologically, residues 336–365 (AQQLSNLPDNLKPGIGDGVYCWLDMSNWAA) are extracellular. Residues 366–386 (MIYFYGPILAIVVANTIMFIM) form a helical membrane-spanning segment. Over 387-417 (TAIKIHGVQREMARIIASENSTKNLRTEKDK) the chain is Cytoplasmic. Residues 418-438 (FGLFLRLFLIMGITWLTELIS) form a helical membrane-spanning segment. Topologically, residues 439–449 (YFVGSDKGWSK) are extracellular. A helical membrane pass occupies residues 450 to 470 (LFYISDLANAMQGFLIFMLFV). Topologically, residues 471-536 (MKKKVKHLIT…VDPQKTTIFR (66 aa)) are cytoplasmic. Residues 487 to 506 (RDGSNQRQSQYSTKTTSSSV) are disordered. The span at 492–505 (QRQSQYSTKTTSSS) shows a compositional bias: low complexity.

This sequence belongs to the G-protein coupled receptor 2 family. Mth subfamily. Homodimer.

Its subcellular location is the cell membrane. Involved in biological aging and stress response. Essential for adult survival. The protein is G-protein coupled receptor Mth2 (mth2) of Drosophila simulans (Fruit fly).